Reading from the N-terminus, the 170-residue chain is Adenine phosphoribosyltransferase (170 aa).

Belongs to the purine/pyrimidine phosphoribosyltransferase family. Homodimer.

Its subcellular location is the cytoplasm. The enzyme catalyses AMP + diphosphate = 5-phospho-alpha-D-ribose 1-diphosphate + adenine. It participates in purine metabolism; AMP biosynthesis via salvage pathway; AMP from adenine: step 1/1. Its function is as follows. Catalyzes a salvage reaction resulting in the formation of AMP, that is energically less costly than de novo synthesis. In Mycoplasma capricolum subsp. capricolum (strain California kid / ATCC 27343 / NCTC 10154), this protein is Adenine phosphoribosyltransferase.